The primary structure comprises 156 residues: Small ribosomal subunit protein uS7 (156 aa).

The protein belongs to the universal ribosomal protein uS7 family. As to quaternary structure, part of the 30S ribosomal subunit. Contacts proteins S9 and S11.

Functionally, one of the primary rRNA binding proteins, it binds directly to 16S rRNA where it nucleates assembly of the head domain of the 30S subunit. Is located at the subunit interface close to the decoding center, probably blocks exit of the E-site tRNA. The protein is Small ribosomal subunit protein uS7 of Halalkalibacterium halodurans (strain ATCC BAA-125 / DSM 18197 / FERM 7344 / JCM 9153 / C-125) (Bacillus halodurans).